Here is a 507-residue protein sequence, read N- to C-terminus: uncharacterized protein (507 aa).

The next 14 membrane-spanning stretches (helical) occupy residues 8–28 (VKGVSWHLLSYFLAAPIAYLV), 41–61 (VGLFYAVLDFFSMLVVFRAFG), 86–106 (IVFVGILQTILAFIVAFLVVI), 130–150 (INILIIMAMGYYFLDSIVAFF), 171–191 (ILSVFIFSLIFIYLFNVHNAY), 193–213 (PSVSYLLMAVVMIIIYGYIVV), 235–255 (LFSYGMYVMIGYAGSLILGYL), 275–295 (VAMPTVNILSYFAFSVGAVLF), 323–343 (IIVTPLAILMAYFPTVIINIL), 355–375 (IQILSFGAMFLTFNSIGFNIL), 387–407 (ILYIGASFNLIFNILLIPKFG), 408–428 (IIGAAITTVFGYFIMWIFQIW), 444–464 (ILVILVGIFSLIPVMFIKDLI), and 467–487 (VILQLFVCGVVYFGIYILGIF).

The protein belongs to the polysaccharide synthase family.

It localises to the cell membrane. This is an uncharacterized protein from Methanocaldococcus jannaschii (strain ATCC 43067 / DSM 2661 / JAL-1 / JCM 10045 / NBRC 100440) (Methanococcus jannaschii).